A 149-amino-acid chain; its full sequence is Transcription antitermination protein NusB (149 aa).

It belongs to the NusB family.

In terms of biological role, involved in transcription antitermination. Required for transcription of ribosomal RNA (rRNA) genes. Binds specifically to the boxA antiterminator sequence of the ribosomal RNA (rrn) operons. This chain is Transcription antitermination protein NusB, found in Acinetobacter baylyi (strain ATCC 33305 / BD413 / ADP1).